Reading from the N-terminus, the 113-residue chain is Hydrogenase maturation factor HypA (113 aa).

His2 contacts Ni(2+). Zn(2+)-binding residues include Cys73, Cys76, Cys89, and Cys92.

It belongs to the HypA/HybF family.

Involved in the maturation of [NiFe] hydrogenases. Required for nickel insertion into the metal center of the hydrogenase. This chain is Hydrogenase maturation factor HypA, found in Aeromonas hydrophila subsp. hydrophila (strain ATCC 7966 / DSM 30187 / BCRC 13018 / CCUG 14551 / JCM 1027 / KCTC 2358 / NCIMB 9240 / NCTC 8049).